Consider the following 136-residue polypeptide: Crossover junction endodeoxyribonuclease Hjc (136 aa).

Glu9 is a Mg(2+) binding site. Ser29 is an active-site residue. Mg(2+) contacts are provided by Asp38 and Glu51.

Belongs to the Holliday junction resolvase Hjc family. In terms of assembly, homodimer. The cofactor is Mg(2+).

The enzyme catalyses Endonucleolytic cleavage at a junction such as a reciprocal single-stranded crossover between two homologous DNA duplexes (Holliday junction).. In terms of biological role, a structure-specific endonuclease that resolves Holliday junction (HJ) intermediates during genetic recombination. Cleaves 4-way DNA junctions introducing paired nicks in opposing strands, leaving a 5'-terminal phosphate and a 3'-terminal hydroxyl group that are subsequently ligated to produce recombinant products. The polypeptide is Crossover junction endodeoxyribonuclease Hjc (Archaeoglobus fulgidus (strain ATCC 49558 / DSM 4304 / JCM 9628 / NBRC 100126 / VC-16)).